Reading from the N-terminus, the 390-residue chain is MIKNLSKPFKWFFQLEAASGLVLLIAAIIALVISNSSLSNLYFDTLNQYLFIGINDFGLKLSVHHWINDLLMAIFFFFVTLEIKREFIQGELSNLKKALLPIIGAVGGMVVPALVYVFINLGNSETLNGWAIPSATDIAFSLGILSLLGSRVPISLKVFLTALAIIDDLGAILIIAFFYSGDLSISYLSLILISYILLLTLNKFGVKKFIPYLIIGAFMWFFTYKSGIHATIAGVLLASTIPHRIKEKDFSLLIKLEHAISPYVAFIIMPIFAFANAGVSLEGLSLTSLLEPVPLGILLGLFVGKQVGVMVVSFIAVKFGVAQMPDKSSWLSLYGVSILTGVGFTMSLFVGNLAFAENIQYIDGVKIGVLAGSLLSTVFGYFILLYASKK.

Helical transmembrane passes span F13–I33, L61–L81, L99–I119, G129–G149, V158–F178, G181–L201, F209–H229, A259–V279, I297–V317, W330–V350, and I367–A387.

It belongs to the NhaA Na(+)/H(+) (TC 2.A.33) antiporter family.

The protein resides in the cell inner membrane. The catalysed reaction is Na(+)(in) + 2 H(+)(out) = Na(+)(out) + 2 H(+)(in). In terms of biological role, na(+)/H(+) antiporter that extrudes sodium in exchange for external protons. The chain is Na(+)/H(+) antiporter NhaA from Pelagibacter ubique (strain HTCC1062).